A 521-amino-acid polypeptide reads, in one-letter code: Ribonuclease Y (521 aa).

The chain crosses the membrane as a helical span at residues 3 to 23 (VSIWMLVITVLAAVAAYFAGS). Positions 211–271 (TVSVVPLPSD…VRREVARMSL (61 aa)) constitute a KH domain. The HD domain maps to 337–430 (IYQHSLEVAF…VQAADALSGA (94 aa)).

This sequence belongs to the RNase Y family.

The protein resides in the cell membrane. Functionally, endoribonuclease that initiates mRNA decay. This is Ribonuclease Y from Pelobacter propionicus (strain DSM 2379 / NBRC 103807 / OttBd1).